The sequence spans 190 residues: Hypoxanthine/guanine phosphoribosyltransferase (190 aa).

The protein belongs to the purine/pyrimidine phosphoribosyltransferase family. Archaeal HPRT subfamily. Homodimer.

The protein resides in the cytoplasm. The enzyme catalyses IMP + diphosphate = hypoxanthine + 5-phospho-alpha-D-ribose 1-diphosphate. It catalyses the reaction GMP + diphosphate = guanine + 5-phospho-alpha-D-ribose 1-diphosphate. The protein operates within purine metabolism; IMP biosynthesis via salvage pathway; IMP from hypoxanthine: step 1/1. Catalyzes a salvage reaction resulting in the formation of IMP that is energically less costly than de novo synthesis. The sequence is that of Hypoxanthine/guanine phosphoribosyltransferase from Methanosarcina barkeri (strain Fusaro / DSM 804).